The chain runs to 159 residues: Ribosomal RNA large subunit methyltransferase H (159 aa).

Residues L76, G108, and 127-132 (FGLLTL) contribute to the S-adenosyl-L-methionine site.

Belongs to the RNA methyltransferase RlmH family. Homodimer.

The protein resides in the cytoplasm. It catalyses the reaction pseudouridine(1915) in 23S rRNA + S-adenosyl-L-methionine = N(3)-methylpseudouridine(1915) in 23S rRNA + S-adenosyl-L-homocysteine + H(+). In terms of biological role, specifically methylates the pseudouridine at position 1915 (m3Psi1915) in 23S rRNA. This Streptococcus pyogenes serotype M3 (strain SSI-1) protein is Ribosomal RNA large subunit methyltransferase H.